The sequence spans 204 residues: Holliday junction branch migration complex subunit RuvA (204 aa).

Positions 1-63 are domain I; sequence MIGKLSGKVD…EEHIHLYGFL (63 aa). The domain II stretch occupies residues 64 to 142; it reads TLEEKIFFNL…KISSGSAIIK (79 aa). The tract at residues 143–149 is flexible linker; it reads ESLNIKN. The interval 150–204 is domain III; sequence ITPVASNEVIKALVNLGFSRFEAQNAVQGIITQNPEISIDELIKTALKNRNSNFS.

Belongs to the RuvA family. Homotetramer. Forms an RuvA(8)-RuvB(12)-Holliday junction (HJ) complex. HJ DNA is sandwiched between 2 RuvA tetramers; dsDNA enters through RuvA and exits via RuvB. An RuvB hexamer assembles on each DNA strand where it exits the tetramer. Each RuvB hexamer is contacted by two RuvA subunits (via domain III) on 2 adjacent RuvB subunits; this complex drives branch migration. In the full resolvosome a probable DNA-RuvA(4)-RuvB(12)-RuvC(2) complex forms which resolves the HJ.

The protein resides in the cytoplasm. In terms of biological role, the RuvA-RuvB-RuvC complex processes Holliday junction (HJ) DNA during genetic recombination and DNA repair, while the RuvA-RuvB complex plays an important role in the rescue of blocked DNA replication forks via replication fork reversal (RFR). RuvA specifically binds to HJ cruciform DNA, conferring on it an open structure. The RuvB hexamer acts as an ATP-dependent pump, pulling dsDNA into and through the RuvAB complex. HJ branch migration allows RuvC to scan DNA until it finds its consensus sequence, where it cleaves and resolves the cruciform DNA. In Rickettsia rickettsii (strain Iowa), this protein is Holliday junction branch migration complex subunit RuvA.